Consider the following 349-residue polypeptide: MAFLRKVNQVLLLLLVLTLCGILYKKVHKGAVLKDKADVDSESPEDMEEEIPVVICAAAGRMGAAMAAINSIYSNTDANLVFYVVGLRSTLPRIRKWIEHSKLREINFKIVEFNPTVLKGKIRPDSSRPELLQPLNFVRFYLPLLVHQHEKVIYLDDDVIVQGDIQELYDTTLALGHAAAFSDDCDLPSAQDIHRLVGLQNTYMGYLDYRKKTIKDLGISPSTCSFNPGVIVANMTEWKHQRITKQLEKWMQKNVEENLYSSSLGGGVATSPMLIVFHGKYSTINPLWHIRHLGWNPDARYSEHFLQEAKLLHWNGRHKPWDFPSVHNDLWESWFVPDPAGIFKLHHNR.

Residues 1–6 (MAFLRK) are Cytoplasmic-facing. The helical; Signal-anchor for type II membrane protein transmembrane segment at 7 to 24 (VNQVLLLLLVLTLCGILY) threads the bilayer. At 25–349 (KKVHKGAVLK…AGIFKLHHNR (325 aa)) the chain is on the lumenal side. N234 carries N-linked (GlcNAc...) asparagine glycosylation.

This sequence belongs to the glycosyltransferase 8 family.

The protein resides in the membrane. The protein is Glycosyltransferase 8 domain-containing protein 2 (Glt8d2) of Mus musculus (Mouse).